The following is a 380-amino-acid chain: Homeobox protein ceh-6 (380 aa).

The segment covering 1 to 25 (MLIPSSSSIPSSLSASASDSEPSSL) has biased composition (low complexity). Disordered regions lie at residues 1-31 (MLIPSSSSIPSSLSASASDSEPSSLNGSGIS), 167-190 (SGSVSGAGGPHQPLSDISDDSEQT), and 265-286 (GSPNSTFEKMTGQAGRKRKKRT). Residues 187 to 261 (SEQTCPDDLE…LLFKWLEEAD (75 aa)) enclose the POU-specific domain. Positions 281-340 (KRKKRTSIEVNVKSRLEFHFQSNQKPNAQEITQVAMELQLEKEVVRVWFCNRRQKEKRIA) form a DNA-binding region, homeobox.

Belongs to the POU transcription factor family. Class-3 subfamily. In terms of assembly, interacts with egl-27, sox-2 and sem-4. Interacts with wdr-5.1. Expressed in a series of neurons in the ring ganglia, excretory cell, dividing neuroblasts in the ventral cord and rectal cells.

It localises to the nucleus. In terms of biological role, vital for embryonic development and essential for the proper function of the excretory cell. Required for the transdifferentiation of the Y rectal epithelial cell to the PDA motor neuron during larval development. The sequence is that of Homeobox protein ceh-6 from Caenorhabditis elegans.